The chain runs to 637 residues: Chaperone protein DnaK (637 aa).

The residue at position 196 (Thr-196) is a Phosphothreonine; by autocatalysis. Disordered stretches follow at residues 503-525 and 598-637; these read AEIN…RKEE and SGAG…DDKK. Residues 598-619 show a composition bias toward low complexity; the sequence is SGAGAAQAQPEAPQNSGSSQSS.

This sequence belongs to the heat shock protein 70 family.

In terms of biological role, acts as a chaperone. This is Chaperone protein DnaK from Chlorobium chlorochromatii (strain CaD3).